The sequence spans 561 residues: MTIDFVTLLHQSDSLLLFVVLAFGLLLGKVRFGNFQIGNTIGVLFTALLFGQMGFEFTATTENVGFMLFIFCVGIEAGPHFFSVFLRDGIHYITLTLVILLTALFLTVGLAKFFNLGPGMAAGILAGSLTSTPALVGAQDALRSGLLNLPHQTDMQSVLDNMGIGYALTYLVGLVGLMLVVRYLPSLARLDLNTEAQKIARERGLSDNESRKTYLPIIRAYRVGPELAAWIGGRTLRETGIYPHTGCYVERIRRNGILASPDGDAVIQEGDEIALVGYPESHEKLDVNYRNGKEVFDRNLLDLQIVTEEIVVKNDAVVGRHLVELNLTEKGCFLNRVVRSQIEMPFDRNIMLQKGDVLQISGEKQRVKLLANKIGFISIHSQTTDLVAFTTFFVLGLLIGSVSLVFGQLEFGLGNAVGLLLAGILMGYLRANHPTVGYVPPGALRLAKDLGLAVFMVSTGLKAGGGILDHLSQVGAVVLFSGMLVTTLPVLVGYLFGVWVLKMNPALLLGAITGARTCAPAMDVVNEAANSSIPALGYAGTYAVANVMLTLAGSFIIGFWF.

5 consecutive transmembrane segments (helical) span residues 8 to 28 (LLHQ…LLLG), 37 to 57 (IGNT…GFEF), 66 to 86 (FMLF…SVFL), 90 to 110 (IHYI…TVGL), and 161 to 181 (NMGI…MLVV). RCK C-terminal domains follow at residues 206 to 291 (SDNE…NYRN) and 293 to 376 (KEVF…KIGF). The next 5 membrane-spanning stretches (helical) occupy residues 386–406 (LVAF…SLVF), 409–429 (LEFG…MGYL), 450–470 (LGLA…ILDH), 476–496 (AVVL…GYLF), and 541–561 (TYAV…GFWF).

This sequence belongs to the AAE transporter (TC 2.A.81) family. YbjL subfamily.

The protein localises to the cell membrane. The protein is Putative transport protein AHA_2450 of Aeromonas hydrophila subsp. hydrophila (strain ATCC 7966 / DSM 30187 / BCRC 13018 / CCUG 14551 / JCM 1027 / KCTC 2358 / NCIMB 9240 / NCTC 8049).